The following is a 223-amino-acid chain: Cytidylate kinase (223 aa).

An ATP-binding site is contributed by 10-18; that stretch reads GPASSGKST.

It belongs to the cytidylate kinase family. Type 1 subfamily.

The protein localises to the cytoplasm. The enzyme catalyses CMP + ATP = CDP + ADP. It carries out the reaction dCMP + ATP = dCDP + ADP. This is Cytidylate kinase from Streptococcus pneumoniae (strain 70585).